A 130-amino-acid polypeptide reads, in one-letter code: Large ribosomal subunit protein bL12c (130 aa).

The protein belongs to the bacterial ribosomal protein bL12 family. In terms of assembly, homodimer. Part of the ribosomal stalk of the 50S ribosomal subunit. Forms a multimeric L10(L12)X complex, where L10 forms an elongated spine to which 2 to 4 L12 dimers bind in a sequential fashion. Binds GTP-bound translation factors.

It is found in the plastid. The protein localises to the chloroplast. In terms of biological role, forms part of the ribosomal stalk which helps the ribosome interact with GTP-bound translation factors. Is thus essential for accurate translation. This is Large ribosomal subunit protein bL12c from Cyanidium caldarium (Red alga).